The primary structure comprises 1791 residues: 1-phosphatidylinositol-3-phosphate 5-kinase FAB1B (1791 aa).

Residues 39–105 form an FYVE-type zinc finger; the sequence is DQSCRVCYEC…VCNYCFRQWE (67 aa). C45, C48, C61, C64, C69, C72, C97, and C100 together coordinate Zn(2+). Disordered stretches follow at residues 166 to 186, 279 to 370, 770 to 790, and 834 to 859; these read HGVS…SRRS, EQFQ…DRTT, SDLS…NPIV, and QQNN…DHQS. The segment covering 279–293 has biased composition (basic and acidic residues); sequence EQFQKKSEHDGRDEC. Residues 324–345 show a composition bias toward acidic residues; sequence PENEEDERESALFDEEDNEGDA. The span at 838–850 shows a compositional bias: basic and acidic residues; it reads EKPKETQSQKEEF. Residues 1077-1111 adopt a coiled-coil conformation; sequence EKGFRRRIGELEEVLQKEKAEFEENMQKILHREVN. Residues 1151–1164 show a composition bias toward basic and acidic residues; the sequence is NSDDTKREENEKPP. Positions 1151 to 1242 are disordered; it reads NSDDTKREEN…DTSYPLENKV (92 aa). Composition is skewed to polar residues over residues 1167–1188 and 1196–1206; these read KSQT…SEVN and TGDTGSLNNVQ. The 326-residue stretch at 1433 to 1758 folds into the PIPK domain; sequence SELNIPRPVD…RFRKAMTTYF (326 aa). The disordered stretch occupies residues 1769-1791; it reads NVVANNSKSDQPEETSQAGTQAE. Over residues 1771-1791 the composition is skewed to polar residues; it reads VANNSKSDQPEETSQAGTQAE.

As to quaternary structure, component of the PI(3,5)P2 regulatory complex at least composed of ATG18, SAC/FIG4, FAB1 and VAC14. Mg(2+) serves as cofactor. Requires Mn(2+) as cofactor. As to expression, ubiquitous with highest expression levels in the root hair zone, pollen, and stamens.

It is found in the endosome membrane. It carries out the reaction a 1,2-diacyl-sn-glycero-3-phospho-(1D-myo-inositol-3-phosphate) + ATP = a 1,2-diacyl-sn-glycero-3-phospho-(1D-myo-inositol-3,5-bisphosphate) + ADP + H(+). The PI(3,5)P2 regulatory complex regulates both the synthesis and turnover of phosphatidylinositol 3,5-bisphosphate (PtdIns(3,5)P2). Catalyzes the phosphorylation of phosphatidylinositol 3-phosphate on the fifth hydroxyl of the myo-inositol ring, to form phosphatidylinositol 3,5-bisphosphate. Plays an important role in maintenance of endomembrane homeostasis including endocytosis, vacuole formation, and vacuolar acidification processes. Required for development of viable pollen. Might mediate recycling of auxin transporters. The protein is 1-phosphatidylinositol-3-phosphate 5-kinase FAB1B (FAB1B) of Arabidopsis thaliana (Mouse-ear cress).